The primary structure comprises 134 residues: Gastrin-releasing peptide (134 aa).

The first 23 residues, 1-23 (MRSREVSLVLLALVLCPAPRGSA), serve as a signal peptide directing secretion. M50 carries the post-translational modification Methionine amide. The propeptide occupies 54-134 (SVAESPQLRE…QREGGNPQLY (81 aa)). Residues 98–134 (PPRWEPLSIHQPAWDSKDVSNFKDSGSQREGGNPQLY) form a disordered region. Residues 119 to 134 (FKDSGSQREGGNPQLY) are compositionally biased toward polar residues.

Belongs to the bombesin/neuromedin-B/ranatensin family.

It localises to the secreted. Its subcellular location is the cytoplasmic vesicle. The protein resides in the secretory vesicle lumen. The protein localises to the cell projection. It is found in the neuron projection. Functionally, stimulates the release of gastrin and other gastrointestinal hormones. Contributes to the perception of prurient stimuli and to the transmission of itch signals in the spinal cord that promote scratching behavior. Contributes primarily to nonhistaminergic itch sensation. In one study, shown to act in the amygdala as part of an inhibitory network which inhibits memory specifically related to learned fear. In another study, shown to act on vasoactive intestinal peptide (VIP)-expressing cells in the auditory cortex, most likely via extrasynaptic diffusion from local and long-range sources, to mediate disinhibition of glutamatergic cells via VIP cell-specific GRPR signaling which leads to enhanced auditory fear memories. Contributes to the regulation of food intake. Inhibits voltage-gated sodium channels but enhances voltage-gated potassium channels in hippocampal neurons. Induces sighing by acting directly on the pre-Botzinger complex, a cluster of several thousand neurons in the ventrolateral medulla responsible for inspiration during respiratory activity. In terms of biological role, induces an itch response through activation of receptors present on mast cells, triggering mast cell degranulation. The protein is Gastrin-releasing peptide (GRP) of Ovis aries (Sheep).